The sequence spans 306 residues: Probable rRNA-processing protein EBP2 (306 aa).

At Met1 the chain carries N-acetylmethionine. Disordered regions lie at residues 1-20 (MDTP…LASD), 75-103 (GPVP…DDFQ), and 150-169 (IRQK…KAKQ). A Phosphothreonine modification is found at Thr3. Residues Ser7, Ser9, Ser11, and Ser13 each carry the phosphoserine modification. Positions 81–90 (SETQPTPQNQ) are enriched in polar residues. The segment covering 91–103 (DQKKGVNPEDDFQ) has biased composition (basic and acidic residues). Lys93 participates in a covalent cross-link: Glycyl lysine isopeptide (Lys-Gly) (interchain with G-Cter in SUMO2). The stretch at 135-171 (DYFAEMAKSDQQMQKIRQKLQTKQAAMEKSEKAKQLR) forms a coiled coil. Residues Lys179 and Lys218 each participate in a glycyl lysine isopeptide (Lys-Gly) (interchain with G-Cter in SUMO2) cross-link. The segment covering 213–224 (LEGDQKPVERSA) has biased composition (basic and acidic residues). The disordered stretch occupies residues 213–306 (LEGDQKPVER…ARQKLKSKAR (94 aa)). Residues Ser264 and Ser270 each carry the phosphoserine modification. Positions 274–306 (KVAHGKGSRRPGKKGANKRPGKRARQKLKSKAR) are enriched in basic residues.

This sequence belongs to the EBP2 family. Interacts with WDR46.

Its subcellular location is the nucleus. The protein localises to the nucleolus. Functionally, required for the processing of the 27S pre-rRNA. This chain is Probable rRNA-processing protein EBP2 (Ebna1bp2), found in Mus musculus (Mouse).